The sequence spans 396 residues: Gap junction gamma-1 protein (396 aa).

At 1-22 (MSWSFLTRLLEEIHNHSTFVGK) the chain is on the cytoplasmic side. The helical transmembrane segment at 23-45 (IWLTVLIVFRIVLTAVGGESIYY) threads the bilayer. At 46–75 (DEQSKFVCNTEQPGCENVCYDAFAPLSHVR) the chain is on the extracellular side. A helical transmembrane segment spans residues 76–95 (FWVFQIILVATPSVMYLGYA). Residues 96–175 (IHKIAKMEHG…RRIREDGLMK (80 aa)) are Cytoplasmic-facing. The segment at 146 to 165 (LESEKENKDQNQSKPKHDGR) is disordered. Residues 147–156 (ESEKENKDQN) are compositionally biased toward basic and acidic residues. The helical transmembrane segment at 176 to 198 (IYVLQLLARTVFEVGFLVGQYFL) threads the bilayer. The Extracellular segment spans residues 199 to 228 (YGFQVHPFYVCSRLPCPHKIDCFISRPTEK). The helical transmembrane segment at 229–248 (TIFLLIMYGVTGLCLLLNIW) threads the bilayer. Residues 249-396 (EMLHLGFGTI…SGDGKTSVWI (148 aa)) are Cytoplasmic-facing. A disordered region spans residues 356-396 (YNHQNNPHGSREKKAKVGSKAGSNKSSASSKSGDGKTSVWI). A compositionally biased stretch (low complexity) spans 373-396 (GSKAGSNKSSASSKSGDGKTSVWI).

Belongs to the connexin family. Gamma-type subfamily. In terms of assembly, a connexon is composed of a hexamer of connexins. Interacts with CNST.

The protein localises to the cell membrane. It localises to the cell junction. The protein resides in the gap junction. Functionally, one gap junction consists of a cluster of closely packed pairs of transmembrane channels, the connexons, through which materials of low MW diffuse from one cell to a neighboring cell. The polypeptide is Gap junction gamma-1 protein (GJC1) (Bos taurus (Bovine)).